The primary structure comprises 257 residues: MLILISPAKTLDYQSPLATTRYTQPELLDHSQQLIHQVRQLSAPQIARLMGISDKLADLNATRFHDWQPHFTPDNARQAILAFKGDVYTGLQAETFSDADFDFAQQHLRMLSGLYGLLRPLDLMQPYRLEMGIRLENPRGKDLYQFWGDIITDKLNETLASQGDRVVINLASEEYFKSVKPKKLNAELIKPVFLDEKNGKFKVISFYAKKARGLMSRFIIENRLTKPEQLTAFNSEGYFFDEETSTQDELVFKRYEQ.

It belongs to the UPF0246 family.

The protein is UPF0246 protein YaaA of Salmonella arizonae (strain ATCC BAA-731 / CDC346-86 / RSK2980).